A 422-amino-acid polypeptide reads, in one-letter code: Killer cell immunoglobulin-like receptor 3DL1 (422 aa).

A signal peptide spans 1–21 (MMFEFLSLLCSGFFLVQRMSA). The Extracellular segment spans residues 22–329 (HMGSYDKPFL…KNLHIQIGLL (308 aa)). 3 consecutive Ig-like C2-type domains span residues 42 to 100 (GQNV…HHQY), 135 to 202 (GENV…YNHS), and 237 to 300 (EQNM…FKNS). N-linked (GlcNAc...) asparagine glycosylation occurs at Asn44. Residues Cys49 and Cys95 are joined by a disulfide bond. Asn137 carries N-linked (GlcNAc...) asparagine glycosylation. Cysteines 142 and 195 form a disulfide. Residues Asn200 and Asn239 are each glycosylated (N-linked (GlcNAc...) asparagine). A disulfide bridge connects residues Cys244 and Cys293. An N-linked (GlcNAc...) asparagine glycan is attached at Asn299. The chain crosses the membrane as a helical span at residues 330–350 (VTMVLVIVVIIIIIIIIIIII). Residues 351-422 (YYYYFSKKSS…DTVVYTEVMI (72 aa)) lie on the Cytoplasmic side of the membrane.

This sequence belongs to the immunoglobulin superfamily.

It localises to the cell membrane. Receptor on natural killer (NK) cells. Inhibits the activity of NK cells thus preventing cell lysis. In Rattus norvegicus (Rat), this protein is Killer cell immunoglobulin-like receptor 3DL1 (Kir3dl1).